Reading from the N-terminus, the 123-residue chain is Large-conductance mechanosensitive channel (123 aa).

2 consecutive transmembrane segments (helical) span residues 14–34 (VLDL…VTSL) and 67–87 (GNFI…FLLV).

The protein belongs to the MscL family. Homopentamer.

Its subcellular location is the cell membrane. Functionally, channel that opens in response to stretch forces in the membrane lipid bilayer. May participate in the regulation of osmotic pressure changes within the cell. This is Large-conductance mechanosensitive channel from Lacticaseibacillus casei (strain BL23) (Lactobacillus casei).